We begin with the raw amino-acid sequence, 613 residues long: Chaperone protein dnaK (613 aa).

This sequence belongs to the heat shock protein 70 family.

It localises to the plastid. The protein resides in the chloroplast. Functionally, acts as a chaperone. This Phaeodactylum tricornutum (strain CCAP 1055/1) protein is Chaperone protein dnaK.